A 119-amino-acid polypeptide reads, in one-letter code: Large ribosomal subunit protein uL18 (119 aa).

Belongs to the universal ribosomal protein uL18 family. In terms of assembly, part of the 50S ribosomal subunit; part of the 5S rRNA/L5/L18/L25 subcomplex. Contacts the 5S and 23S rRNAs.

Its function is as follows. This is one of the proteins that bind and probably mediate the attachment of the 5S RNA into the large ribosomal subunit, where it forms part of the central protuberance. The chain is Large ribosomal subunit protein uL18 from Clostridium botulinum (strain 657 / Type Ba4).